Consider the following 1235-residue polypeptide: Ubiquitin carboxyl-terminal hydrolase 40 (1235 aa).

The USP domain occupies 41-482 (SGIRNQGGTC…SAYMLFYRKS (442 aa)). C50 acts as the Nucleophile in catalysis. H305 (proton acceptor) is an active-site residue. Positions 1180-1190 (IRDDTGKEKQK) are enriched in basic and acidic residues. The interval 1180 to 1235 (IRDDTGKEKQKQRALGRRKSQEALHEQSSYILSSAETPARPRAPETSLSIHVGSFR) is disordered. The span at 1205–1215 (EQSSYILSSAE) shows a compositional bias: polar residues.

The protein belongs to the peptidase C19 family. Broadly expressed.

It carries out the reaction Thiol-dependent hydrolysis of ester, thioester, amide, peptide and isopeptide bonds formed by the C-terminal Gly of ubiquitin (a 76-residue protein attached to proteins as an intracellular targeting signal).. Its function is as follows. May be catalytically inactive. In Homo sapiens (Human), this protein is Ubiquitin carboxyl-terminal hydrolase 40 (USP40).